We begin with the raw amino-acid sequence, 337 residues long: 4-hydroxythreonine-4-phosphate dehydrogenase (337 aa).

Residues H137 and T138 each contribute to the substrate site. A divalent metal cation-binding residues include H167, H212, and H267. Positions 275, 284, and 293 each coordinate substrate.

Belongs to the PdxA family. As to quaternary structure, homodimer. Zn(2+) is required as a cofactor. It depends on Mg(2+) as a cofactor. The cofactor is Co(2+).

The protein resides in the cytoplasm. The catalysed reaction is 4-(phosphooxy)-L-threonine + NAD(+) = 3-amino-2-oxopropyl phosphate + CO2 + NADH. It functions in the pathway cofactor biosynthesis; pyridoxine 5'-phosphate biosynthesis; pyridoxine 5'-phosphate from D-erythrose 4-phosphate: step 4/5. Catalyzes the NAD(P)-dependent oxidation of 4-(phosphooxy)-L-threonine (HTP) into 2-amino-3-oxo-4-(phosphooxy)butyric acid which spontaneously decarboxylates to form 3-amino-2-oxopropyl phosphate (AHAP). The sequence is that of 4-hydroxythreonine-4-phosphate dehydrogenase from Ectopseudomonas mendocina (strain ymp) (Pseudomonas mendocina).